We begin with the raw amino-acid sequence, 232 residues long: MSLIDTVRNTLVPVHREGYRFIAIFFVVSLALGFLWEPLMWIGFVLTAWCAYFFRDPERMTPIDDDLVISPADGTVSSVATVMPPEELGLGSEPMLRISVFMNVFNCHVNRAPMGGTVRRIAYRAGKFVNAELDKASQENERNGLVIETKHGQIGVVQIAGLVARRILCWTRESASLEAGERFGLIRFGSRLDVFLPAGAEPRVTVGQTATGGETVLAEFGSAKGPVISRRA.

The Schiff-base intermediate with substrate; via pyruvic acid role is filled by Ser-190. Residue Ser-190 is modified to Pyruvic acid (Ser); by autocatalysis.

The protein belongs to the phosphatidylserine decarboxylase family. PSD-A subfamily. Heterodimer of a large membrane-associated beta subunit and a small pyruvoyl-containing alpha subunit. Pyruvate serves as cofactor. Is synthesized initially as an inactive proenzyme. Formation of the active enzyme involves a self-maturation process in which the active site pyruvoyl group is generated from an internal serine residue via an autocatalytic post-translational modification. Two non-identical subunits are generated from the proenzyme in this reaction, and the pyruvate is formed at the N-terminus of the alpha chain, which is derived from the carboxyl end of the proenzyme. The post-translation cleavage follows an unusual pathway, termed non-hydrolytic serinolysis, in which the side chain hydroxyl group of the serine supplies its oxygen atom to form the C-terminus of the beta chain, while the remainder of the serine residue undergoes an oxidative deamination to produce ammonia and the pyruvoyl prosthetic group on the alpha chain.

It localises to the cell membrane. It catalyses the reaction a 1,2-diacyl-sn-glycero-3-phospho-L-serine + H(+) = a 1,2-diacyl-sn-glycero-3-phosphoethanolamine + CO2. Its pathway is phospholipid metabolism; phosphatidylethanolamine biosynthesis; phosphatidylethanolamine from CDP-diacylglycerol: step 2/2. Functionally, catalyzes the formation of phosphatidylethanolamine (PtdEtn) from phosphatidylserine (PtdSer). Important for establishment of root nodule symbiosis with the host plant. This chain is Phosphatidylserine decarboxylase proenzyme, found in Rhizobium meliloti (strain 1021) (Ensifer meliloti).